A 354-amino-acid polypeptide reads, in one-letter code: Uroporphyrinogen decarboxylase (354 aa).

Residues 27-31, Asp-77, Tyr-154, Thr-209, and His-327 each bind substrate; that span reads RQAGR.

The protein belongs to the uroporphyrinogen decarboxylase family. Homodimer.

It localises to the cytoplasm. The enzyme catalyses uroporphyrinogen III + 4 H(+) = coproporphyrinogen III + 4 CO2. Its pathway is porphyrin-containing compound metabolism; protoporphyrin-IX biosynthesis; coproporphyrinogen-III from 5-aminolevulinate: step 4/4. Functionally, catalyzes the decarboxylation of four acetate groups of uroporphyrinogen-III to yield coproporphyrinogen-III. The sequence is that of Uroporphyrinogen decarboxylase from Salmonella heidelberg (strain SL476).